Consider the following 235-residue polypeptide: MTASTDAIDSVLLDIEGTTIPVAFVHQVLFPYARAAMPGLLAQRADDPAVRAAVADIAALAPGVPPLDQLNAWMDRDEKIGPLKALQGLAWEEGYRTGALRATLYPDVVPALRRWRAAGLRLAVYSSGSEAAQRLIYGHTTDGDVAGLFSGFYDLRIGGKRAAGSYRAILAETGWAAGRTLFLSDITAELDAAEEAGLRTCQLVRPEDGTVAGDRHPVATTLDDVARRFALPVAA.

This sequence belongs to the HAD-like hydrolase superfamily. MasA/MtnC family. As to quaternary structure, monomer. Mg(2+) serves as cofactor.

It catalyses the reaction 5-methylsulfanyl-2,3-dioxopentyl phosphate + H2O = 1,2-dihydroxy-5-(methylsulfanyl)pent-1-en-3-one + phosphate. The protein operates within amino-acid biosynthesis; L-methionine biosynthesis via salvage pathway; L-methionine from S-methyl-5-thio-alpha-D-ribose 1-phosphate: step 3/6. It functions in the pathway amino-acid biosynthesis; L-methionine biosynthesis via salvage pathway; L-methionine from S-methyl-5-thio-alpha-D-ribose 1-phosphate: step 4/6. Its function is as follows. Bifunctional enzyme that catalyzes the enolization of 2,3-diketo-5-methylthiopentyl-1-phosphate (DK-MTP-1-P) into the intermediate 2-hydroxy-3-keto-5-methylthiopentenyl-1-phosphate (HK-MTPenyl-1-P), which is then dephosphorylated to form the acireductone 1,2-dihydroxy-3-keto-5-methylthiopentene (DHK-MTPene). In Gluconacetobacter diazotrophicus (strain ATCC 49037 / DSM 5601 / CCUG 37298 / CIP 103539 / LMG 7603 / PAl5), this protein is Enolase-phosphatase E1.